We begin with the raw amino-acid sequence, 261 residues long: Imidazole glycerol phosphate synthase subunit HisF (261 aa).

Active-site residues include Asp16 and Asp135.

Belongs to the HisA/HisF family. As to quaternary structure, heterodimer of HisH and HisF.

Its subcellular location is the cytoplasm. The catalysed reaction is 5-[(5-phospho-1-deoxy-D-ribulos-1-ylimino)methylamino]-1-(5-phospho-beta-D-ribosyl)imidazole-4-carboxamide + L-glutamine = D-erythro-1-(imidazol-4-yl)glycerol 3-phosphate + 5-amino-1-(5-phospho-beta-D-ribosyl)imidazole-4-carboxamide + L-glutamate + H(+). Its pathway is amino-acid biosynthesis; L-histidine biosynthesis; L-histidine from 5-phospho-alpha-D-ribose 1-diphosphate: step 5/9. In terms of biological role, IGPS catalyzes the conversion of PRFAR and glutamine to IGP, AICAR and glutamate. The HisF subunit catalyzes the cyclization activity that produces IGP and AICAR from PRFAR using the ammonia provided by the HisH subunit. The sequence is that of Imidazole glycerol phosphate synthase subunit HisF from Mycolicibacterium smegmatis (strain ATCC 700084 / mc(2)155) (Mycobacterium smegmatis).